Here is a 461-residue protein sequence, read N- to C-terminus: Serine incorporator 5 (461 aa).

Residues 1–36 (MSARCCAGQLACCCGSAGCSLCCGCCPKFRQSRTTR) are Extracellular-facing. The chain crosses the membrane as a helical span at residues 37-57 (FMYLFYFILVIALCCVMMTPS). The Cytoplasmic portion of the chain corresponds to 58-90 (VMKQVKDHIPFFEEFCKKTQAGGDACENLVGYS). Residues 91–111 (AVYRVCFGMACFFALFCLLTL) form a helical membrane-spanning segment. The Extracellular segment spans residues 112 to 125 (KVNNSKSCRAYIHN). Asn114 carries N-linked (GlcNAc...) asparagine glycosylation. The chain crosses the membrane as a helical span at residues 126 to 146 (GFWFFKLLLLGAMCSGAFFIP). At 147 to 157 (DQETFLKVWRY) the chain is on the cytoplasmic side. The helical transmembrane segment at 158–178 (VGAGGSFLFICIQLLLIVQFA) threads the bilayer. The Extracellular portion of the chain corresponds to 179-200 (HKWNKNWTAGTVRNKLWYASLS). The N-linked (GlcNAc...) asparagine glycan is linked to Asn184. A helical membrane pass occupies residues 201-221 (LVTLIMYSVAVGGLALMAVFY). The Cytoplasmic portion of the chain corresponds to 222–231 (TQWDDCMDNK). The helical transmembrane segment at 232 to 252 (ILLGVHGGLCVLISLVAISPC) threads the bilayer. The Extracellular portion of the chain corresponds to 253 to 260 (VQNRQPHS). Residues 261 to 281 (GLLQSGLISCYVTYLTFSALT) traverse the membrane as a helical segment. Residues 282 to 312 (SKPEKKVLDEHGKNVTICAPDFGQDLHRDEN) lie on the Cytoplasmic side of the membrane. Residues 313-333 (MVTWLGTLLLIVCISYSCLTS) traverse the membrane as a helical segment. Residues 334–392 (TTRSSSDALQSRYGAPELEVARCCFCFGPDGEDTEEQQNVKKGPRVIYDEKKGTVYSYS) lie on the Extracellular side of the membrane. A helical membrane pass occupies residues 393–413 (YFHFVFFLASLYVMMTLTSWF). The Cytoplasmic portion of the chain corresponds to 414–422 (HYENATIKT). Residues 423–443 (FFSGWSVFWVKMASCWMCVLL) form a helical membrane-spanning segment. The Extracellular portion of the chain corresponds to 444–461 (YLQTLVAPLCCPSRQFSV).

It belongs to the TDE1 family.

The protein resides in the cell membrane. It carries out the reaction a 1,2-diacyl-sn-glycero-3-phospho-L-serine(in) = a 1,2-diacyl-sn-glycero-3-phospho-L-serine(out). The enzyme catalyses a 1,2-diacyl-sn-glycero-3-phosphocholine(in) = a 1,2-diacyl-sn-glycero-3-phosphocholine(out). The catalysed reaction is a 1,2-diacyl-sn-glycero-3-phosphoethanolamine(in) = a 1,2-diacyl-sn-glycero-3-phosphoethanolamine(out). Its function is as follows. Restriction factor required to restrict infectivity of gammaretroviruses: acts by inhibiting an early step of viral infection. Impairs the penetration of the viral particle into the cytoplasm. Non-ATP-dependent, non-specific lipid transporter for phosphatidylserine, phosphatidylcholine, and phosphatidylethanolamine. Functions as a scramblase that flips lipids in both directions across the membrane. Phospholipid scrambling results in gammaretroviral surface exposure of phosphatidylserine and loss of membrane asymmetry, which leads to loss of infectivity. Enhances the incorporation of serine into phosphatidylserine and sphingolipids. May play a role in providing serine molecules for the formation of myelin glycosphingolipids in oligodendrocytes. This is Serine incorporator 5 (Serinc5) from Mus musculus (Mouse).